A 592-amino-acid chain; its full sequence is Aspartate--tRNA ligase (592 aa).

Glu-173 is an L-aspartate binding site. The tract at residues 197-200 is aspartate; it reads QLFK. Arg-219 is a binding site for L-aspartate. ATP-binding positions include 219 to 221 and Gln-228; that span reads RDE. An L-aspartate-binding site is contributed by His-448. An ATP-binding site is contributed by Glu-482. Position 489 (Arg-489) interacts with L-aspartate. 534-537 provides a ligand contact to ATP; it reads GLDR.

It belongs to the class-II aminoacyl-tRNA synthetase family. Type 1 subfamily. As to quaternary structure, homodimer.

It is found in the cytoplasm. It carries out the reaction tRNA(Asp) + L-aspartate + ATP = L-aspartyl-tRNA(Asp) + AMP + diphosphate. Its function is as follows. Catalyzes the attachment of L-aspartate to tRNA(Asp) in a two-step reaction: L-aspartate is first activated by ATP to form Asp-AMP and then transferred to the acceptor end of tRNA(Asp). The sequence is that of Aspartate--tRNA ligase from Shewanella baltica (strain OS223).